Here is a 221-residue protein sequence, read N- to C-terminus: Cytidylate kinase 1 (221 aa).

7–15 (GPSASGKSS) contributes to the ATP binding site.

This sequence belongs to the cytidylate kinase family. Type 1 subfamily.

It is found in the cytoplasm. It carries out the reaction CMP + ATP = CDP + ADP. The catalysed reaction is dCMP + ATP = dCDP + ADP. The protein is Cytidylate kinase 1 of Borrelia garinii subsp. bavariensis (strain ATCC BAA-2496 / DSM 23469 / PBi) (Borreliella bavariensis).